The sequence spans 338 residues: MPGPTQALSPNGENNNDIIQDNGTTIIPFRKHTVRGERSYSWGMAVNVYSTSITQETMSRHDIIAWVNDILALNYTKVEQLCSGAAYCQFMDMLFPGCISLKKVKFQAKLEHEYIHNFKLLQASFKRMNVDKVIPVEKLVKGRFQDNLDFIQWFKKFFDANYDGKEYDPVEARQGQDALPPPDPGEQIFNLPKKSHHANSPTAGAAKSSPASKPGSTPSRPSSAKKAAPSSSASKSDKDLETQVIQLSEQVHSLKLALEGVEKERDFYFGKLREIELLCQEHGGENNDLVHRLMEVLYASEEHESHTEEHEGEEQVHEQPSSRRSTDSRSVSDNFHFV.

Positions 1–21 (MPGPTQALSPNGENNNDIIQD) are disordered. A Calponin-homology (CH) domain is found at 57–159 (TMSRHDIIAW…FIQWFKKFFD (103 aa)). Disordered regions lie at residues 171–241 (EARQ…KDLE) and 300–338 (SEEH…FHFV). Over residues 200-234 (SPTAGAAKSSPASKPGSTPSRPSSAKKAAPSSSAS) the composition is skewed to low complexity. An EB1 C-terminal domain is found at 236-306 (SDKDLETQVI…LYASEEHESH (71 aa)). Residues 300-327 (SEEHESHTEEHEGEEQVHEQPSSRRSTD) show a composition bias toward basic and acidic residues. Residues 328–338 (SRSVSDNFHFV) are compositionally biased toward low complexity.

The protein belongs to the MAPRE family.

It is found in the cytoplasm. It localises to the cytoskeleton. Its function is as follows. May be involved in microtubule polymerization, and spindle function by stabilizing microtubules and anchoring them at centrosomes. The protein is Microtubule-associated protein RP/EB family member 2 (MAPRE2) of Gallus gallus (Chicken).